Here is an 80-residue protein sequence, read N- to C-terminus: U6-ctenitoxin-Pn1a (80 aa).

The N-terminal stretch at 1–21 (MWLKIQVFVLALALITLGIQA) is a signal peptide. Residues 22–37 (EPNSGPNNPLIQEEAR) constitute a propeptide that is removed on maturation. 4 cysteine pairs are disulfide-bonded: Cys-39–Cys-54, Cys-46–Cys-59, Cys-53–Cys-69, and Cys-61–Cys-67. Residues 72-80 (TLGDLFGRR) constitute a propeptide that is removed on maturation.

It belongs to the neurotoxin 02 (plectoxin) family. 01 (Tx3) subfamily. As to expression, expressed by the venom gland.

Its subcellular location is the secreted. Antagonist of L-type calcium channels (Cav1/CACNA1). This Phoneutria nigriventer (Brazilian armed spider) protein is U6-ctenitoxin-Pn1a.